Consider the following 314-residue polypeptide: Coiled-coil domain-containing protein 69 (314 aa).

Positions 1–12 are enriched in low complexity; that stretch reads MGCHNSKVCGQV. 2 disordered regions span residues 1–43 and 114–133; these read MGCH…HSSE and RSVS…LHSE. G2 carries N-myristoyl glycine lipidation. Basic and acidic residues-rich tracts occupy residues 20 to 43 and 120 to 133; these read KAQE…HSSE and HQSE…LHSE. Residues 106–291 are a coiled coil; it reads NDLHEQQMRS…QEKEELLFKL (186 aa).

The protein belongs to the CCDC69 family.

The protein localises to the cytoplasm. Its subcellular location is the cytoskeleton. The protein resides in the spindle. It is found in the midbody. Functionally, may act as a scaffold to regulate the recruitment and assembly of spindle midzone components. In Danio rerio (Zebrafish), this protein is Coiled-coil domain-containing protein 69 (ccdc69).